A 34-amino-acid chain; its full sequence is Omega/M-ectatotoxin-Et1a subunit B (34 aa).

Cysteine 10 and cysteine 32 are disulfide-bonded.

Belongs to the ectatomin family. Ectatomin-Et subfamily. Heterodimer of an A and a B chain; disulfide-linked. Expressed by the venom gland.

It is found in the secreted. The protein localises to the target cell membrane. Algogenic for animals, human and insects. At high concentrations (0.5-1 uM), it acts as a pore-forming protein that forms nonselective cation channels both in cell and artificial membranes. It is weakly selective for cation over anions channel conductance is identical in both directions. At lower concentrations (1-10 nM), this heterodimer inhibits cardiac L-type calcium currents in isolated rat cardiac ventricular myocytes. The chain is Omega/M-ectatotoxin-Et1a subunit B from Ectatomma tuberculatum (Selva ant).